The primary structure comprises 286 residues: Elongation factor Ts (286 aa).

The involved in Mg(2+) ion dislocation from EF-Tu stretch occupies residues 79–82 (TDFV).

This sequence belongs to the EF-Ts family.

The protein resides in the cytoplasm. Its function is as follows. Associates with the EF-Tu.GDP complex and induces the exchange of GDP to GTP. It remains bound to the aminoacyl-tRNA.EF-Tu.GTP complex up to the GTP hydrolysis stage on the ribosome. The sequence is that of Elongation factor Ts from Wolbachia sp. subsp. Drosophila simulans (strain wRi).